Here is a 139-residue protein sequence, read N- to C-terminus: MTRVVATGTFDILHPGHVLYLSEAGKLGDELYVIVARDSTIKHKRKPLVPENQRLFMVRALKCVDHAMLGSEDDMFKPIREIDPDIITIGFNQHWDEEALQRQLIERGLKAKVVRITKCDTAPYASSRHIREKIKESDC.

ATP is bound by residues 9–10, 14–17, and Asn-92; these read TF and HPGH.

This sequence belongs to the archaeal FAD synthase family. Homodimer. It depends on a divalent metal cation as a cofactor.

The enzyme catalyses FMN + ATP + H(+) = FAD + diphosphate. Its pathway is cofactor biosynthesis; FAD biosynthesis; FAD from FMN: step 1/1. Functionally, catalyzes the transfer of the AMP portion of ATP to flavin mononucleotide (FMN) to produce flavin adenine dinucleotide (FAD) coenzyme. The chain is FAD synthase from Methanocella paludicola (strain DSM 17711 / JCM 13418 / NBRC 101707 / SANAE).